Here is a 131-residue protein sequence, read N- to C-terminus: Small ribosomal subunit protein uS8 (131 aa).

It belongs to the universal ribosomal protein uS8 family. Part of the 30S ribosomal subunit. Contacts proteins S5 and S12.

In terms of biological role, one of the primary rRNA binding proteins, it binds directly to 16S rRNA central domain where it helps coordinate assembly of the platform of the 30S subunit. In Acinetobacter baylyi (strain ATCC 33305 / BD413 / ADP1), this protein is Small ribosomal subunit protein uS8.